The primary structure comprises 55 residues: Variant surface glycoprotein ETAT 1.2 (55 aa).

N-linked (GlcNAc...) asparagine glycosylation is present at asparagine 34. Asparagine 38 carries the GPI-anchor amidated asparagine lipid modification. Residues 39-55 (NSFAIKTSTLLLAVLLF) constitute a propeptide, removed in mature form.

The protein resides in the cell membrane. Its function is as follows. VSG forms a coat on the surface of the parasite. The trypanosome evades the immune response of the host by expressing a series of antigenically distinct VSGs from an estimated 1000 VSG genes. This is Variant surface glycoprotein ETAT 1.2 from Trypanosoma brucei rhodesiense.